Consider the following 177-residue polypeptide: Adenine phosphoribosyltransferase (177 aa).

Belongs to the purine/pyrimidine phosphoribosyltransferase family. In terms of assembly, homodimer.

It is found in the cytoplasm. It carries out the reaction AMP + diphosphate = 5-phospho-alpha-D-ribose 1-diphosphate + adenine. It functions in the pathway purine metabolism; AMP biosynthesis via salvage pathway; AMP from adenine: step 1/1. Catalyzes a salvage reaction resulting in the formation of AMP, that is energically less costly than de novo synthesis. This chain is Adenine phosphoribosyltransferase, found in Mycoplasma pneumoniae (strain ATCC 29342 / M129 / Subtype 1) (Mycoplasmoides pneumoniae).